A 438-amino-acid chain; its full sequence is DNA primase DnaG (438 aa).

The region spanning 169–243 is the Toprim domain; sequence DSIIVVEGRA…DIDYVARAPY (75 aa). Residues Glu175, Asp217, and Asp219 each contribute to the Mg(2+) site.

Belongs to the archaeal DnaG primase family. Forms a ternary complex with MCM helicase and DNA. Mg(2+) serves as cofactor.

The catalysed reaction is ssDNA + n NTP = ssDNA/pppN(pN)n-1 hybrid + (n-1) diphosphate.. Its function is as follows. RNA polymerase that catalyzes the synthesis of short RNA molecules used as primers for DNA polymerase during DNA replication. The chain is DNA primase DnaG from Methanococcus maripaludis (strain C6 / ATCC BAA-1332).